Reading from the N-terminus, the 638-residue chain is 1-deoxy-D-xylulose-5-phosphate synthase (638 aa).

Residues His72 and 113–115 (GHA) contribute to the thiamine diphosphate site. Asp144 contributes to the Mg(2+) binding site. Residues 145 to 146 (GA), Asn174, Tyr287, and Glu370 contribute to the thiamine diphosphate site. Asn174 lines the Mg(2+) pocket.

Belongs to the transketolase family. DXPS subfamily. Homodimer. It depends on Mg(2+) as a cofactor. The cofactor is thiamine diphosphate.

It carries out the reaction D-glyceraldehyde 3-phosphate + pyruvate + H(+) = 1-deoxy-D-xylulose 5-phosphate + CO2. It participates in metabolic intermediate biosynthesis; 1-deoxy-D-xylulose 5-phosphate biosynthesis; 1-deoxy-D-xylulose 5-phosphate from D-glyceraldehyde 3-phosphate and pyruvate: step 1/1. Its function is as follows. Catalyzes the acyloin condensation reaction between C atoms 2 and 3 of pyruvate and glyceraldehyde 3-phosphate to yield 1-deoxy-D-xylulose-5-phosphate (DXP). This chain is 1-deoxy-D-xylulose-5-phosphate synthase, found in Picosynechococcus sp. (strain ATCC 27264 / PCC 7002 / PR-6) (Agmenellum quadruplicatum).